The primary structure comprises 316 residues: tRNA dimethylallyltransferase (316 aa).

An ATP-binding site is contributed by 17 to 24; sequence GPTASGKT. Residue 19-24 participates in substrate binding; it reads TASGKT. Interaction with substrate tRNA regions lie at residues 42–45, 166–170, 247–252, and 280–287; these read DSAL, QRLSR, RCVGYR, and KRQITWLR.

This sequence belongs to the IPP transferase family. As to quaternary structure, monomer. Requires Mg(2+) as cofactor.

The catalysed reaction is adenosine(37) in tRNA + dimethylallyl diphosphate = N(6)-dimethylallyladenosine(37) in tRNA + diphosphate. In terms of biological role, catalyzes the transfer of a dimethylallyl group onto the adenine at position 37 in tRNAs that read codons beginning with uridine, leading to the formation of N6-(dimethylallyl)adenosine (i(6)A). The protein is tRNA dimethylallyltransferase of Shigella flexneri serotype 5b (strain 8401).